The chain runs to 227 residues: Ribonuclease 3 (227 aa).

An RNase III domain is found at 4–133 (FEKLEKLLSY…LIAAIYLDSN (130 aa)). Glu46 contributes to the Mg(2+) binding site. Residue Asp50 is part of the active site. Mg(2+) is bound by residues Asn119 and Glu122. Glu122 is a catalytic residue. One can recognise a DRBM domain in the interval 158-226 (DPKTALQEWA…ARSLLHRLKN (69 aa)).

Belongs to the ribonuclease III family. Homodimer. Mg(2+) is required as a cofactor.

Its subcellular location is the cytoplasm. The catalysed reaction is Endonucleolytic cleavage to 5'-phosphomonoester.. Digests double-stranded RNA. Involved in the processing of primary rRNA transcript to yield the immediate precursors to the large and small rRNAs (23S and 16S). Processes some mRNAs, and tRNAs when they are encoded in the rRNA operon. Processes pre-crRNA and tracrRNA of type II CRISPR loci if present in the organism. In Rickettsia africae (strain ESF-5), this protein is Ribonuclease 3.